We begin with the raw amino-acid sequence, 453 residues long: Protein FAM222A (453 aa).

The protein belongs to the FAM222 family.

In Mus musculus (Mouse), this protein is Protein FAM222A (Fam222a).